The following is a 182-amino-acid chain: Heat shock protein beta-2 (182 aa).

The sHSP domain maps to 55–163 (RAGEGARAGA…DTEVNEVYIS (109 aa)).

The protein belongs to the small heat shock protein (HSP20) family. Interacts with DMPK; may enhance its kinase activity.

It is found in the cytoplasm. The protein resides in the nucleus. Functionally, may regulate the kinase DMPK. This Mus musculus (Mouse) protein is Heat shock protein beta-2 (Hspb2).